A 108-amino-acid polypeptide reads, in one-letter code: Phosphoribosyl-ATP pyrophosphatase (108 aa).

This sequence belongs to the PRA-PH family.

It localises to the cytoplasm. The catalysed reaction is 1-(5-phospho-beta-D-ribosyl)-ATP + H2O = 1-(5-phospho-beta-D-ribosyl)-5'-AMP + diphosphate + H(+). It participates in amino-acid biosynthesis; L-histidine biosynthesis; L-histidine from 5-phospho-alpha-D-ribose 1-diphosphate: step 2/9. This chain is Phosphoribosyl-ATP pyrophosphatase, found in Chromobacterium violaceum (strain ATCC 12472 / DSM 30191 / JCM 1249 / CCUG 213 / NBRC 12614 / NCIMB 9131 / NCTC 9757 / MK).